The following is an 89-amino-acid chain: Small ribosomal subunit protein uS19 (89 aa).

Belongs to the universal ribosomal protein uS19 family.

Functionally, protein S19 forms a complex with S13 that binds strongly to the 16S ribosomal RNA. The chain is Small ribosomal subunit protein uS19 from Xylella fastidiosa (strain M23).